A 459-amino-acid chain; its full sequence is Cysteine--tRNA ligase (459 aa).

C28 contributes to the Zn(2+) binding site. The 'HIGH' region motif lies at 30–40; the sequence is VTVYDLCHFGH. The Zn(2+) site is built by C209, H234, and E238. A 'KMSKS' region motif is present at residues 266 to 270; it reads KMSKS. ATP is bound at residue K269.

The protein belongs to the class-I aminoacyl-tRNA synthetase family. Monomer. Zn(2+) is required as a cofactor.

It is found in the cytoplasm. It carries out the reaction tRNA(Cys) + L-cysteine + ATP = L-cysteinyl-tRNA(Cys) + AMP + diphosphate. The chain is Cysteine--tRNA ligase from Actinobacillus pleuropneumoniae serotype 5b (strain L20).